We begin with the raw amino-acid sequence, 319 residues long: Transaldolase (319 aa).

Lys-126 functions as the Schiff-base intermediate with substrate in the catalytic mechanism.

The protein belongs to the transaldolase family. Type 1 subfamily. Homodimer.

Its subcellular location is the cytoplasm. The enzyme catalyses D-sedoheptulose 7-phosphate + D-glyceraldehyde 3-phosphate = D-erythrose 4-phosphate + beta-D-fructose 6-phosphate. The protein operates within carbohydrate degradation; pentose phosphate pathway; D-glyceraldehyde 3-phosphate and beta-D-fructose 6-phosphate from D-ribose 5-phosphate and D-xylulose 5-phosphate (non-oxidative stage): step 2/3. Functionally, transaldolase is important for the balance of metabolites in the pentose-phosphate pathway. The chain is Transaldolase from Bordetella avium (strain 197N).